We begin with the raw amino-acid sequence, 117 residues long: UPF0251 protein cbdbA217 (117 aa).

Belongs to the UPF0251 family.

This is UPF0251 protein cbdbA217 from Dehalococcoides mccartyi (strain CBDB1).